A 391-amino-acid polypeptide reads, in one-letter code: Bifunctional enzyme IspD/IspF (391 aa).

The interval methionine 1–isoleucine 230 is 2-C-methyl-D-erythritol 4-phosphate cytidylyltransferase. Residues arginine 231–lysine 391 are 2-C-methyl-D-erythritol 2,4-cyclodiphosphate synthase. Residues aspartate 237 and histidine 239 each contribute to the a divalent metal cation site. 4-CDP-2-C-methyl-D-erythritol 2-phosphate-binding positions include aspartate 237 to histidine 239 and histidine 263 to serine 264. Histidine 271 contacts a divalent metal cation. Residues aspartate 285–glycine 287, threonine 361–glutamate 364, phenylalanine 368, and arginine 371 each bind 4-CDP-2-C-methyl-D-erythritol 2-phosphate.

This sequence in the N-terminal section; belongs to the IspD/TarI cytidylyltransferase family. IspD subfamily. In the C-terminal section; belongs to the IspF family. A divalent metal cation serves as cofactor.

The enzyme catalyses 2-C-methyl-D-erythritol 4-phosphate + CTP + H(+) = 4-CDP-2-C-methyl-D-erythritol + diphosphate. It catalyses the reaction 4-CDP-2-C-methyl-D-erythritol 2-phosphate = 2-C-methyl-D-erythritol 2,4-cyclic diphosphate + CMP. It participates in isoprenoid biosynthesis; isopentenyl diphosphate biosynthesis via DXP pathway; isopentenyl diphosphate from 1-deoxy-D-xylulose 5-phosphate: step 2/6. Its pathway is isoprenoid biosynthesis; isopentenyl diphosphate biosynthesis via DXP pathway; isopentenyl diphosphate from 1-deoxy-D-xylulose 5-phosphate: step 4/6. Functionally, bifunctional enzyme that catalyzes the formation of 4-diphosphocytidyl-2-C-methyl-D-erythritol from CTP and 2-C-methyl-D-erythritol 4-phosphate (MEP) (IspD), and catalyzes the conversion of 4-diphosphocytidyl-2-C-methyl-D-erythritol 2-phosphate (CDP-ME2P) to 2-C-methyl-D-erythritol 2,4-cyclodiphosphate (ME-CPP) with a corresponding release of cytidine 5-monophosphate (CMP) (IspF). The chain is Bifunctional enzyme IspD/IspF from Bartonella quintana (strain Toulouse) (Rochalimaea quintana).